A 593-amino-acid polypeptide reads, in one-letter code: METQNTLRKPMDGTGTSPMTVLKRLWPYIRPLIGIVVLAVVTMGVVAATEAGIPALLKPLLDHGFGSHGSDSAKWYVPIAVIGLALVRGVSQYTSNYLLNYVSNRILLQLRLEMFQRMIHTGASFFQRETASTVINAIVFEVNQILSVLTGVMVTLVRDSLTVIFLLGYLFYLNWRLTLIVAVILPGIGWLVSKINRRLRRLNREHQTLTNELSYIVEETVGGYKVVKVHNGEAYEMDRFTTMSKRLRGYAMRMTISGGLAQPLTQFLASIALAVVITIAVVQSSNDQTTVGGFVAFVTSMLLVISPLKHLIDVNQPLQRGMTAAELIFGLIDEPAEPQGGGRPLSQARGEIEFRAVSFDYGAAERPTLDRISFKVAPGEMIALAGPSGSGKTTLVNLLPRFFDPTDGTILVDGVPVSDYDLHALRSQMAMVSQDVVLFNDTIAANVAYGQTPDRARVQAALEAANLADAVAAMPDGLDTLVGGNGMRLSGGQRQRLAIARAIYKDAPILILDEATSALDSESERHVQAALERLMEGRTTLVIAHRLSTIERADRILVLEAGKIVEEGSHDELLRHGGLYAHLHRIQYQQQAA.

6 consecutive transmembrane segments (helical) span residues 33–53 (IGIVVLAVVTMGVVAATEAGI), 75–95 (WYVPIAVIGLALVRGVSQYTS), 137–157 (AIVFEVNQILSVLTGVMVTLV), 164–184 (IFLLGYLFYLNWRLTLIVAVI), 262–282 (QPLTQFLASIALAVVITIAVV), and 292–312 (GGFVAFVTSMLLVISPLKHLI). An ABC transmembrane type-1 domain is found at 37–320 (VLAVVTMGVV…LIDVNQPLQR (284 aa)). Residues 352 to 586 (IEFRAVSFDY…GGLYAHLHRI (235 aa)) enclose the ABC transporter domain. 386 to 393 (GPSGSGKT) is a binding site for ATP.

It belongs to the ABC transporter superfamily. Lipid exporter (TC 3.A.1.106) family. As to quaternary structure, homodimer.

The protein localises to the cell inner membrane. It carries out the reaction ATP + H2O + lipid A-core oligosaccharideSide 1 = ADP + phosphate + lipid A-core oligosaccharideSide 2.. Functionally, involved in lipopolysaccharide (LPS) biosynthesis. Translocates lipid A-core from the inner to the outer leaflet of the inner membrane. Transmembrane domains (TMD) form a pore in the inner membrane and the ATP-binding domain (NBD) is responsible for energy generation. In Burkholderia orbicola (strain AU 1054), this protein is ATP-dependent lipid A-core flippase.